The sequence spans 273 residues: CUE domain-containing protein 2-A (273 aa).

The disordered stretch occupies residues 92-121; the sequence is GKENVSPKPTAEVSFMTPTSSSTESSKKIE. Positions 135 to 178 constitute a CUE domain; it reads DAKNGIDLLLEIFPSCTVSQAQTALSMAKGDLEDAVQIIVDGKV.

The protein belongs to the CUEDC2 family. Post-translationally, phosphorylated.

It is found in the cytoplasm. The protein localises to the nucleus. Its function is as follows. May play a role in targeting proteins for ubiquitination and subsequent proteasomal degradation. This is CUE domain-containing protein 2-A (cuedc2-a) from Xenopus laevis (African clawed frog).